A 454-amino-acid chain; its full sequence is Tol-Pal system protein TolB (454 aa).

Residues 1–21 (MSLRPISLMLALLLTSAPALA) form the signal peptide.

It belongs to the TolB family. In terms of assembly, the Tol-Pal system is composed of five core proteins: the inner membrane proteins TolA, TolQ and TolR, the periplasmic protein TolB and the outer membrane protein Pal. They form a network linking the inner and outer membranes and the peptidoglycan layer.

Its subcellular location is the periplasm. Its function is as follows. Part of the Tol-Pal system, which plays a role in outer membrane invagination during cell division and is important for maintaining outer membrane integrity. This chain is Tol-Pal system protein TolB, found in Sphingopyxis alaskensis (strain DSM 13593 / LMG 18877 / RB2256) (Sphingomonas alaskensis).